Consider the following 435-residue polypeptide: Methylenetetrahydrofolate--tRNA-(uracil-5-)-methyltransferase TrmFO (435 aa).

An FAD-binding site is contributed by 9 to 14; that stretch reads GAGLAG.

The protein belongs to the MnmG family. TrmFO subfamily. FAD serves as cofactor.

It is found in the cytoplasm. The catalysed reaction is uridine(54) in tRNA + (6R)-5,10-methylene-5,6,7,8-tetrahydrofolate + NADH + H(+) = 5-methyluridine(54) in tRNA + (6S)-5,6,7,8-tetrahydrofolate + NAD(+). It carries out the reaction uridine(54) in tRNA + (6R)-5,10-methylene-5,6,7,8-tetrahydrofolate + NADPH + H(+) = 5-methyluridine(54) in tRNA + (6S)-5,6,7,8-tetrahydrofolate + NADP(+). Functionally, catalyzes the folate-dependent formation of 5-methyl-uridine at position 54 (M-5-U54) in all tRNAs. In Staphylococcus aureus (strain MRSA252), this protein is Methylenetetrahydrofolate--tRNA-(uracil-5-)-methyltransferase TrmFO.